Reading from the N-terminus, the 220-residue chain is MTFKQIAIDGPAGAGKSTVAKKLAALLGYTYVDSGAMYRALTYWALKNDINIHNVEAIVNLCTSIHITFINQDIAVNNQIVNTEIRSPEVNNNVSHIAKIPEVRKHLVSLQKCIALSQNVIMDGRDIGTHVLPDADIKVFLTASTQERAQRRYIELVEKGIQTSLMEVEQGIIQRDQMDSKRQYAPLTQADDAVVIDSTGKSIDAIVEEVLRIFNGKERG.

10 to 18 (GPAGAGKST) lines the ATP pocket.

It belongs to the cytidylate kinase family. Type 1 subfamily.

The protein resides in the cytoplasm. It carries out the reaction CMP + ATP = CDP + ADP. It catalyses the reaction dCMP + ATP = dCDP + ADP. The protein is Cytidylate kinase of Alkaliphilus metalliredigens (strain QYMF).